Here is a 428-residue protein sequence, read N- to C-terminus: 3-phosphoshikimate 1-carboxyvinyltransferase (428 aa).

Residues K23, S24, and R28 each contribute to the 3-phosphoshikimate site. K23 provides a ligand contact to phosphoenolpyruvate. Positions 97 and 125 each coordinate phosphoenolpyruvate. Residues S170, S171, Q172, S198, D314, N337, and K341 each coordinate 3-phosphoshikimate. Residue Q172 coordinates phosphoenolpyruvate. D314 functions as the Proton acceptor in the catalytic mechanism. Phosphoenolpyruvate is bound by residues R345, R387, and K412.

The protein belongs to the EPSP synthase family. In terms of assembly, monomer.

The protein resides in the cytoplasm. It carries out the reaction 3-phosphoshikimate + phosphoenolpyruvate = 5-O-(1-carboxyvinyl)-3-phosphoshikimate + phosphate. The protein operates within metabolic intermediate biosynthesis; chorismate biosynthesis; chorismate from D-erythrose 4-phosphate and phosphoenolpyruvate: step 6/7. In terms of biological role, catalyzes the transfer of the enolpyruvyl moiety of phosphoenolpyruvate (PEP) to the 5-hydroxyl of shikimate-3-phosphate (S3P) to produce enolpyruvyl shikimate-3-phosphate and inorganic phosphate. This is 3-phosphoshikimate 1-carboxyvinyltransferase from Yersinia pestis bv. Antiqua (strain Antiqua).